We begin with the raw amino-acid sequence, 211 residues long: Arginine exporter protein ArgO (211 aa).

6 helical membrane passes run 1–21, 37–57, 68–88, 111–131, 147–167, and 182–202; these read MFSY…PLGP, IMIA…GIFG, LLAL…FGAF, IIAT…DTFV, WFAL…AILA, and IINL…ARDG.

The protein belongs to the LysE/ArgO transporter (TC 2.A.75) family.

It localises to the cell inner membrane. It carries out the reaction L-arginine(in) = L-arginine(out). Its function is as follows. Involved in the export of arginine. Important to control the intracellular level of arginine and the correct balance between arginine and lysine. This Escherichia coli O157:H7 protein is Arginine exporter protein ArgO.